The chain runs to 183 residues: Isopentenyl-diphosphate Delta-isomerase (183 aa).

Mn(2+) contacts are provided by histidine 26 and histidine 33. One can recognise a Nudix hydrolase domain in the interval proline 31–glutamate 169. Residue cysteine 68 is part of the active site. Position 68 (cysteine 68) interacts with Mg(2+). Histidine 70 lines the Mn(2+) pocket. Glutamate 88 lines the Mg(2+) pocket. Residues glutamate 118 and glutamate 120 each contribute to the Mn(2+) site. Residue glutamate 120 is part of the active site.

The protein belongs to the IPP isomerase type 1 family. The cofactor is Mg(2+). Mn(2+) serves as cofactor.

The protein localises to the cytoplasm. It catalyses the reaction isopentenyl diphosphate = dimethylallyl diphosphate. It participates in isoprenoid biosynthesis; dimethylallyl diphosphate biosynthesis; dimethylallyl diphosphate from isopentenyl diphosphate: step 1/1. In terms of biological role, catalyzes the 1,3-allylic rearrangement of the homoallylic substrate isopentenyl (IPP) to its highly electrophilic allylic isomer, dimethylallyl diphosphate (DMAPP). This Corynebacterium diphtheriae (strain ATCC 700971 / NCTC 13129 / Biotype gravis) protein is Isopentenyl-diphosphate Delta-isomerase.